We begin with the raw amino-acid sequence, 709 residues long: Meiotic sister-chromatid recombination protein 6, mitochondrial (709 aa).

A mitochondrion-targeting transit peptide spans 1–29; that stretch reads MLRINQRLLVRSLRDAQYQYLKSTALRFL.

Its subcellular location is the mitochondrion. In terms of biological role, may be involved in the control of meiotic sister-chromatid recombination. This chain is Meiotic sister-chromatid recombination protein 6, mitochondrial (MSC6), found in Candida glabrata (strain ATCC 2001 / BCRC 20586 / JCM 3761 / NBRC 0622 / NRRL Y-65 / CBS 138) (Yeast).